A 414-amino-acid chain; its full sequence is Serine hydroxymethyltransferase (414 aa).

Residues Leu-121 and 125–127 (GHL) each bind (6S)-5,6,7,8-tetrahydrofolate. At Lys-229 the chain carries N6-(pyridoxal phosphate)lysine.

This sequence belongs to the SHMT family. In terms of assembly, homodimer. Pyridoxal 5'-phosphate is required as a cofactor.

Its subcellular location is the cytoplasm. It carries out the reaction (6R)-5,10-methylene-5,6,7,8-tetrahydrofolate + glycine + H2O = (6S)-5,6,7,8-tetrahydrofolate + L-serine. Its pathway is one-carbon metabolism; tetrahydrofolate interconversion. The protein operates within amino-acid biosynthesis; glycine biosynthesis; glycine from L-serine: step 1/1. Catalyzes the reversible interconversion of serine and glycine with tetrahydrofolate (THF) serving as the one-carbon carrier. This reaction serves as the major source of one-carbon groups required for the biosynthesis of purines, thymidylate, methionine, and other important biomolecules. Also exhibits THF-independent aldolase activity toward beta-hydroxyamino acids, producing glycine and aldehydes, via a retro-aldol mechanism. The protein is Serine hydroxymethyltransferase of Albidiferax ferrireducens (strain ATCC BAA-621 / DSM 15236 / T118) (Rhodoferax ferrireducens).